The primary structure comprises 301 residues: Probable alpha-L-glutamate ligase (301 aa).

The ATP-grasp domain maps to Leu-104–Glu-287. ATP contacts are provided by residues Lys-141, Glu-178–Phe-179, Asp-187, and Arg-211–Asn-213. Mg(2+) is bound by residues Asp-248, Glu-260, and Asn-262. Mn(2+)-binding residues include Asp-248, Glu-260, and Asn-262.

Belongs to the RimK family. Mg(2+) serves as cofactor. Mn(2+) is required as a cofactor.

This Marinobacter nauticus (strain ATCC 700491 / DSM 11845 / VT8) (Marinobacter aquaeolei) protein is Probable alpha-L-glutamate ligase.